We begin with the raw amino-acid sequence, 180 residues long: Transcriptional repressor NrdR (180 aa).

A zinc finger lies at 3–34 (CPYCQNTSSRVLESRSTEAGQSIRRRRECLQC). In terms of domain architecture, ATP-cone spans 49 to 139 (ISVLKKDKSK…VYGEFKGITD (91 aa)). Residues 148 to 180 (QQEERESSSSPEWSDAGEEATVIEDSSQVMASS) are disordered. Residues 171-180 (EDSSQVMASS) show a composition bias toward polar residues.

The protein belongs to the NrdR family. Zn(2+) serves as cofactor.

Functionally, negatively regulates transcription of bacterial ribonucleotide reductase nrd genes and operons by binding to NrdR-boxes. The sequence is that of Transcriptional repressor NrdR from Gloeothece citriformis (strain PCC 7424) (Cyanothece sp. (strain PCC 7424)).